Reading from the N-terminus, the 315-residue chain is Ribosomal RNA large subunit methyltransferase F (315 aa).

The protein belongs to the methyltransferase superfamily. METTL16/RlmF family.

Its subcellular location is the cytoplasm. The enzyme catalyses adenosine(1618) in 23S rRNA + S-adenosyl-L-methionine = N(6)-methyladenosine(1618) in 23S rRNA + S-adenosyl-L-homocysteine + H(+). Specifically methylates the adenine in position 1618 of 23S rRNA. The polypeptide is Ribosomal RNA large subunit methyltransferase F (Aeromonas salmonicida (strain A449)).